The sequence spans 348 residues: Papaya proteinase 4 (348 aa).

Positions 1-18 (MAIICSFSKLLFVAICLF) are cleaved as a signal peptide. The propeptide at 19-132 (GHMSLSYCDF…EEFVNEDIVD (114 aa)) is activation peptide. Cystine bridges form between cysteine 154–cysteine 195, cysteine 188–cysteine 227, and cysteine 285–cysteine 336. Cysteine 157 is an active-site residue. Residues histidine 291 and asparagine 311 contribute to the active site.

The protein belongs to the peptidase C1 family.

The enzyme catalyses Preferential cleavage: Gly-|-Xaa, in proteins and in small molecule substrates.. Its activity is regulated as follows. Not inhibited by cystatin. Thiol protease with a substrate specificity very different from the other thiol proteases. This is Papaya proteinase 4 from Carica papaya (Papaya).